A 287-amino-acid polypeptide reads, in one-letter code: 3-hydroxyanthranilate 3,4-dioxygenase (287 aa).

A domain A (catalytic) region spans residues 1-163; sequence MTNQSLHVNI…SKENETGKPD (163 aa). Arginine 46 lines the O2 pocket. 3 residues coordinate Fe cation: histidine 50, glutamate 56, and histidine 94. Substrate is bound at residue glutamate 56. The substrate site is built by arginine 98 and glutamate 108. A linker region spans residues 164–180; the sequence is PANPIKPAPYPLNTMNV. The domain B stretch occupies residues 181–287; sequence MTPFSFREWV…AQDPDRKRPY (107 aa).

The protein belongs to the 3-HAO family. In terms of assembly, monomer. Requires Fe(2+) as cofactor.

The protein localises to the cytoplasm. Its subcellular location is the cytosol. It catalyses the reaction 3-hydroxyanthranilate + O2 = (2Z,4Z)-2-amino-3-carboxymuconate 6-semialdehyde. The protein operates within cofactor biosynthesis; NAD(+) biosynthesis; quinolinate from L-kynurenine: step 3/3. Functionally, catalyzes the oxidative ring opening of 3-hydroxyanthranilate to 2-amino-3-carboxymuconate semialdehyde, which spontaneously cyclizes to quinolinate. The polypeptide is 3-hydroxyanthranilate 3,4-dioxygenase (haao) (Danio rerio (Zebrafish)).